A 92-amino-acid chain; its full sequence is UPF0250 protein VV0902 (92 aa).

Belongs to the UPF0250 family.

This chain is UPF0250 protein VV0902, found in Vibrio vulnificus (strain YJ016).